The chain runs to 241 residues: Homeobox protein TGIF2LX (241 aa).

2 disordered regions span residues 1–58 (MEAA…GNLP) and 127–207 (GKGA…ELVS). Positions 10-39 (ETQSPVQKDSPAKTQSPAQDTSIMSRNNAD) are enriched in polar residues. The homeobox; TALE-type DNA-binding region spans 48–111 (EHKKKRKGNL…INARRRILPD (64 aa)).

It belongs to the TALE/TGIF homeobox family.

The protein localises to the nucleus. May have a transcription role in testis. The chain is Homeobox protein TGIF2LX (TGIF2LX) from Pan paniscus (Pygmy chimpanzee).